A 1498-amino-acid chain; its full sequence is Golgin subfamily A member 3 (1498 aa).

Position 1 is an N-acetylmethionine (M1). Residues 1–118 are disordered; that stretch reads MDGASAEQDG…GTSAEGSVRK (118 aa). S18 is modified (phosphoserine). A compositionally biased stretch (pro residues) spans 27–36; sequence PLKPPGPLVP. S57 carries the phosphoserine modification. Residues 71 to 81 are compositionally biased toward pro residues; it reads PTPPFPDPPSS. The segment at 121-141 is interaction with GOPC; that stretch reads LQSLRLSLPMQETQLCSTDSP. 2 disordered regions span residues 166-195 and 216-325; these read RVKR…MLNP and SVPR…SAST. The golgi-targeting domain stretch occupies residues 172–257; it reads ERSSQPATKT…DYRTEDSNAG (86 aa). Composition is skewed to polar residues over residues 173–184 and 269–291; these read RSSQPATKTRLF and TKGS…SLSP. The residue at position 272 (S272) is a Phosphoserine. The span at 315 to 324 shows a compositional bias: low complexity; that stretch reads SDSSSYSSAS. Phosphoserine occurs at positions 385, 389, and 465. The stretch at 394–1459 forms a coiled coil; sequence VSLESSAAET…ALTVHESLSS (1066 aa). Positions 789–801 are enriched in basic and acidic residues; it reads KEELDRGARRLEE. Disordered regions lie at residues 789–809, 974–993, 1376–1400, and 1440–1498; these read KEEL…TSET, QKQK…KEMK, RGAA…PIKI, and DSLQ…GPGE. S983 bears the Phosphoserine mark. A compositionally biased stretch (basic and acidic residues) spans 1376–1387; sequence RGAAKTRKEPKG. The residue at position 1392 (S1392) is a Phosphoserine. The span at 1440-1452 shows a compositional bias: basic and acidic residues; the sequence is DSLQRQMEEHALT.

Homodimer. Interacts with GOLGA7. Isoform 1 interacts with GOPC while isoform 3 does not. In terms of processing, cleaved by caspases in apoptotic cells. As to expression, expressed in all tissues tested. Expressed in liver, testis, lung, heart, salivary gland and kidney.

The protein resides in the cytoplasm. Its subcellular location is the golgi apparatus. It localises to the golgi stack membrane. In terms of biological role, golgi auto-antigen; probably involved in maintaining Golgi structure. The sequence is that of Golgin subfamily A member 3 (GOLGA3) from Homo sapiens (Human).